The sequence spans 79 residues: NAD(P)H-quinone oxidoreductase subunit L (79 aa).

2 helical membrane passes run 10-30 (IIIA…IPAV) and 48-68 (GFMY…SPFL).

This sequence belongs to the complex I NdhL subunit family. As to quaternary structure, NDH-1 can be composed of about 15 different subunits; different subcomplexes with different compositions have been identified which probably have different functions.

It localises to the cellular thylakoid membrane. The enzyme catalyses a plastoquinone + NADH + (n+1) H(+)(in) = a plastoquinol + NAD(+) + n H(+)(out). It carries out the reaction a plastoquinone + NADPH + (n+1) H(+)(in) = a plastoquinol + NADP(+) + n H(+)(out). Functionally, NDH-1 shuttles electrons from an unknown electron donor, via FMN and iron-sulfur (Fe-S) centers, to quinones in the respiratory and/or the photosynthetic chain. The immediate electron acceptor for the enzyme in this species is believed to be plastoquinone. Couples the redox reaction to proton translocation, and thus conserves the redox energy in a proton gradient. Cyanobacterial NDH-1 also plays a role in inorganic carbon-concentration. The polypeptide is NAD(P)H-quinone oxidoreductase subunit L (Microcystis aeruginosa (strain NIES-843 / IAM M-2473)).